Reading from the N-terminus, the 343-residue chain is tRNA N6-adenosine threonylcarbamoyltransferase (343 aa).

Residues H120 and H124 each coordinate Fe cation. Substrate contacts are provided by residues 142–146 (VVSGG), D175, G188, D192, and N281. Position 310 (D310) interacts with Fe cation.

It belongs to the KAE1 / TsaD family. It depends on Fe(2+) as a cofactor.

It is found in the cytoplasm. The enzyme catalyses L-threonylcarbamoyladenylate + adenosine(37) in tRNA = N(6)-L-threonylcarbamoyladenosine(37) in tRNA + AMP + H(+). Its function is as follows. Required for the formation of a threonylcarbamoyl group on adenosine at position 37 (t(6)A37) in tRNAs that read codons beginning with adenine. Is involved in the transfer of the threonylcarbamoyl moiety of threonylcarbamoyl-AMP (TC-AMP) to the N6 group of A37, together with TsaE and TsaB. TsaD likely plays a direct catalytic role in this reaction. This Bacillus anthracis protein is tRNA N6-adenosine threonylcarbamoyltransferase.